The sequence spans 249 residues: Sec-independent protein translocase protein TatC (249 aa).

6 helical membrane-spanning segments follow: residues 18–38, 69–89, 96–116, 151–171, 187–207, and 208–228; these read VSVG…KNIF, AIVI…APGL, VILP…AFSY, LILG…LAKV, IVVI…SQIF, and MALP…MVNP.

Belongs to the TatC family. The Tat system comprises two distinct complexes: a TatABC complex, containing multiple copies of TatA, TatB and TatC subunits, and a separate TatA complex, containing only TatA subunits. Substrates initially bind to the TatABC complex, which probably triggers association of the separate TatA complex to form the active translocon.

It is found in the cell inner membrane. In terms of biological role, part of the twin-arginine translocation (Tat) system that transports large folded proteins containing a characteristic twin-arginine motif in their signal peptide across membranes. Together with TatB, TatC is part of a receptor directly interacting with Tat signal peptides. The sequence is that of Sec-independent protein translocase protein TatC from Helicobacter pylori (strain J99 / ATCC 700824) (Campylobacter pylori J99).